The following is a 287-amino-acid chain: Acetyl-coenzyme A carboxylase carboxyl transferase subunit beta (287 aa).

The CoA carboxyltransferase N-terminal domain maps to 36 to 287 (MWVKCDRCGK…KVLYKILELH (252 aa)). Residues Cys40, Cys43, Cys59, and Cys62 each contribute to the Zn(2+) site. A C4-type zinc finger spans residues 40-62 (CDRCGKTLYKKDLDENLKVCKFC).

Belongs to the AccD/PCCB family. As to quaternary structure, acetyl-CoA carboxylase is a heterohexamer composed of biotin carboxyl carrier protein (AccB), biotin carboxylase (AccC) and two subunits each of ACCase subunit alpha (AccA) and ACCase subunit beta (AccD). Requires Zn(2+) as cofactor.

The protein resides in the cytoplasm. The catalysed reaction is N(6)-carboxybiotinyl-L-lysyl-[protein] + acetyl-CoA = N(6)-biotinyl-L-lysyl-[protein] + malonyl-CoA. It functions in the pathway lipid metabolism; malonyl-CoA biosynthesis; malonyl-CoA from acetyl-CoA: step 1/1. Functionally, component of the acetyl coenzyme A carboxylase (ACC) complex. Biotin carboxylase (BC) catalyzes the carboxylation of biotin on its carrier protein (BCCP) and then the CO(2) group is transferred by the transcarboxylase to acetyl-CoA to form malonyl-CoA. The chain is Acetyl-coenzyme A carboxylase carboxyl transferase subunit beta from Clostridium novyi (strain NT).